The primary structure comprises 172 residues: uncharacterized protein (172 aa).

This is an uncharacterized protein from Pasteurella multocida (strain Pm70).